We begin with the raw amino-acid sequence, 384 residues long: PqqA peptide cyclase (384 aa).

A Radical SAM core domain is found at 5–220 (VGLPLWLLAE…TNEYREKLKA (216 aa)). [4Fe-4S] cluster is bound by residues cysteine 19, cysteine 23, and cysteine 26.

Belongs to the radical SAM superfamily. PqqE family. Interacts with PqqD. The interaction is necessary for activity of PqqE. [4Fe-4S] cluster serves as cofactor.

It carries out the reaction [PQQ precursor protein] + S-adenosyl-L-methionine = E-Y cross-linked-[PQQ precursor protein] + 5'-deoxyadenosine + L-methionine + H(+). It participates in cofactor biosynthesis; pyrroloquinoline quinone biosynthesis. Catalyzes the cross-linking of a glutamate residue and a tyrosine residue in the PqqA protein as part of the biosynthesis of pyrroloquinoline quinone (PQQ). This chain is PqqA peptide cyclase, found in Acinetobacter baumannii (strain ACICU).